The sequence spans 680 residues: PAN2-PAN3 deadenylation complex subunit PAN3 (680 aa).

Disordered stretches follow at residues 1–26, 51–87, and 99–120; these read MATTRYNSNDFRRQLGSPRPKGRADT, HDQTKKSPKPDATTRKTLNVDSAPFTPAVSSQPSKKT, and FTPRATAATPTGTPTAQETDIP. The C3H1-type zinc finger occupies 25 to 54; the sequence is DTKDTLCRNILIYGHCRYEDAGCAFNHDQT. The segment covering 52–64 has biased composition (basic and acidic residues); that stretch reads DQTKKSPKPDATT. The PABPC-interacting motif-2 (PAM-2) motif lies at 62–82; the sequence is ATTRKTLNVDSAPFTPAVSSQ. A compositionally biased stretch (low complexity) spans 99–117; sequence FTPRATAATPTGTPTAQET. The tract at residues 256–522 is pseudokinase domain; it reads QTMTGTAALQ…TVKNLVAGIN (267 aa). ATP-binding positions include arginine 311, 360–367, and 422–423; these read EYYPLAET and TK. Residues 523 to 561 adopt a coiled-coil conformation; sequence EHVMTAFDAQQRQSDMLYSELYREVENGRVLRLLMKLAT. The segment at 562–680 is knob domain; sequence INERTEYDKD…VHHPSHRDRF (119 aa). Over residues 655 to 669 the composition is skewed to gly residues; sequence SGNGRGGPVASGSGH. The tract at residues 655–680 is disordered; the sequence is SGNGRGGPVASGSGHGVHHPSHRDRF. Basic residues predominate over residues 670-680; sequence GVHHPSHRDRF.

The protein belongs to the protein kinase superfamily. PAN3 family. Homodimer. Forms a heterotrimer with a catalytic subunit PAN2 to form the poly(A)-nuclease (PAN) deadenylation complex. Interacts (via PAM-2 motif) with poly(A)-binding protein PAB1 (via PABC domain), conferring substrate specificity of the enzyme complex.

It is found in the cytoplasm. In terms of biological role, regulatory subunit of the poly(A)-nuclease (PAN) deadenylation complex, one of two cytoplasmic mRNA deadenylases involved in mRNA turnover. PAN specifically shortens poly(A) tails of RNA and the activity is stimulated by poly(A)-binding protein PAB1. PAN deadenylation is followed by rapid degradation of the shortened mRNA tails by the CCR4-NOT complex. Deadenylated mRNAs are then degraded by two alternative mechanisms, namely exosome-mediated 3'-5' exonucleolytic degradation, or deadenylation-dependent mRNA decaping and subsequent 5'-3' exonucleolytic degradation by XRN1. May also be involved in post-transcriptional maturation of mRNA poly(A) tails. PAN3 acts as a positive regulator for PAN activity, recruiting the catalytic subunit PAN2 to mRNA via its interaction with RNA and with PAB1. The polypeptide is PAN2-PAN3 deadenylation complex subunit PAN3 (Pyricularia oryzae (strain 70-15 / ATCC MYA-4617 / FGSC 8958) (Rice blast fungus)).